Reading from the N-terminus, the 533-residue chain is Nuclear receptor corepressor 1 (533 aa).

Residues 1-17 (KDKGPPPKSRYEEELRT) are compositionally biased toward basic and acidic residues. Positions 1 to 21 (KDKGPPPKSRYEEELRTRGKT) are disordered. The CORNR box 1 motif lies at 29 to 33 (IDVII). The disordered stretch occupies residues 37-144 (IASDKDARER…EGMGQVPRTH (108 aa)). The segment covering 38 to 47 (ASDKDARERG) has biased composition (basic and acidic residues). Residues 48–59 (SQSSDSSSSLSS) show a composition bias toward low complexity. Residues Ser-73 and Ser-77 each carry the phosphoserine modification. Positions 130–209 (PSSQAEGMGQ…QSQTVLHPRP (80 aa)) are ID1. A required for interaction with RARA in the absence of its ligand region spans residues 145 to 148 (RLIT). The CORNR box 2 motif lies at 153–157 (ICQII). A compositionally biased stretch (low complexity) spans 165–180 (QVPSQPSTSTFQTSPS). The segment at 165–254 (QVPSQPSTST…SPPQGPAVHE (90 aa)) is disordered. Over residues 181–204 (ALSSTPVRTKPSSRYSPESQSQTV) the composition is skewed to polar residues. Ser-196, Ser-214, Ser-230, Ser-245, and Ser-278 each carry phosphoserine. Residues 218-236 (LVDKSRGSRPGKSPERSHI) are compositionally biased toward basic and acidic residues. The ID2 stretch occupies residues 306–367 (IFRKLNSSGG…EDIIRKALMG (62 aa)). Residues 357-361 (LEDII) carry the CORNR box 3 motif. Over residues 382 to 399 (HPVGVVPGSASTSVVTSS) the composition is skewed to low complexity. Residues 382–476 (HPVGVVPGSA…RPSSTGSTQF (95 aa)) form a disordered region. A Phosphothreonine modification is found at Thr-492. Phosphoserine is present on residues Ser-529 and Ser-531.

Belongs to the N-CoR nuclear receptor corepressors family. In terms of assembly, forms a large corepressor complex that contains SIN3A/B and histone deacetylases HDAC1 and HDAC2. This complex associates with the thyroid receptor (TR) and the retinoid acid receptor (RAR) in the absence of ligand. Interacts directly with RARA; the interaction is facilitated with RARA trimethylation. Component of the N-Cor repressor complex, at least composed of CBFA2T3, HEXIM1, NCOR1, NCOR2, HDAC3, TBL1X, TBL1XR1, CORO2A and GPS2. Interacts with ZBTB33; the interaction serves to recruit the N-CoR complex to promoter regions containing methylated CpG dinucleotides. Interacts with TRIM28 and KDM3A. Interacts (via the RD1 domain) with BAZ1A (via its N-terminal); the interaction corepresses a number of NCOR1-regulated genes. Interacts with BCL6, C1D, DACH1, HEXIM1, HDAC7, RORA, RORC, SAP30, SIAH2, SIN3A and SIN3B. May interact with DEAF1. Interacts with RXRA. Interacts with SETD5. Interacts with VDR. Interacts with ZBTB7A. Interacts with AR. Interacts with HDAC3. In terms of processing, ubiquitinated; mediated by SIAH2 and leading to its subsequent proteasomal degradation.

The protein localises to the nucleus. In terms of biological role, mediates transcriptional repression by certain nuclear receptors. Part of a complex which promotes histone deacetylation and the formation of repressive chromatin structures which may impede the access of basal transcription factors. Participates in the transcriptional repressor activity produced by BCL6. Recruited by ZBTB7A to the androgen response elements/ARE on target genes, negatively regulates androgen receptor signaling and androgen-induced cell proliferation. Mediates the NR1D1-dependent repression and circadian regulation of TSHB expression. The NCOR1-HDAC3 complex regulates the circadian expression of the core clock gene ARTNL/BMAL1 and the genes involved in lipid metabolism in the liver. The polypeptide is Nuclear receptor corepressor 1 (Ncor1) (Rattus norvegicus (Rat)).